Consider the following 391-residue polypeptide: Casein kinase II subunit alpha (391 aa).

The tract at residues 36 to 41 (QDDYQL) is interaction with beta subunit. In terms of domain architecture, Protein kinase spans 39–324 (YQLVRKLGRG…AREAMEHPYF (286 aa)). ATP contacts are provided by residues 45–53 (LGRGKYSEV) and Lys68. The Proton acceptor role is filled by Asp156. 2 positions are modified to phosphothreonine; by CDK1: Thr344 and Thr360. Ser362 and Ser370 each carry phosphoserine; by CDK1.

It belongs to the protein kinase superfamily. Ser/Thr protein kinase family. CK2 subfamily. In terms of assembly, heterotetramer composed of two catalytic subunits (alpha chain and/or alpha' chain) and two regulatory subunits (beta chains). The tetramer can exist as a combination of 2 alpha/2 beta, 2 alpha'/2 beta or 1 alpha/1 alpha'/2 beta subunits. Also part of a CK2-SPT16-SSRP1 complex composed of SSRP1, SUPT16H, CSNK2A1, CSNK2A2 and CSNK2B, which forms following UV irradiation. Interacts with RNPS1. Interacts with SNAI1. Interacts with PML. Interacts with CCAR2. Interacts with HIRIP3. Post-translationally, phosphorylated at Thr-344, Thr-360, Ser-362 and Ser-370 by CDK1 in prophase and metaphase and dephosphorylated during anaphase. Phosphorylation does not directly affect casein kinase 2 activity, but may contribute to its regulation by forming binding sites for interacting proteins and/or targeting it to different compartments.

It localises to the nucleus. It catalyses the reaction L-seryl-[protein] + ATP = O-phospho-L-seryl-[protein] + ADP + H(+). It carries out the reaction L-threonyl-[protein] + ATP = O-phospho-L-threonyl-[protein] + ADP + H(+). Its activity is regulated as follows. Constitutively active protein kinase whose activity is not directly affected by phosphorylation. Seems to be regulated by level of expression and localization. Its function is as follows. Catalytic subunit of a constitutively active serine/threonine-protein kinase complex that phosphorylates a large number of substrates containing acidic residues C-terminal to the phosphorylated serine or threonine. Regulates numerous cellular processes, such as cell cycle progression, apoptosis and transcription, as well as viral infection. May act as a regulatory node which integrates and coordinates numerous signals leading to an appropriate cellular response. During mitosis, functions as a component of the p53/TP53-dependent spindle assembly checkpoint (SAC) that maintains cyclin-B-CDK1 activity and G2 arrest in response to spindle damage. Also required for p53/TP53-mediated apoptosis, phosphorylating 'Ser-392' of p53/TP53 following UV irradiation. Phosphorylates a number of DNA repair proteins in response to DNA damage, such as MDC1, MRE11, RAD9A, RAD51 and HTATSF1, promoting their recruitment to DNA damage sites. Can also negatively regulate apoptosis. Phosphorylates the caspases CASP9 and CASP2 and the apoptotic regulator NOL3. Phosphorylation protects CASP9 from cleavage and activation by CASP8, and inhibits the dimerization of CASP2 and activation of CASP8. Phosphorylates YY1, protecting YY1 from cleavage by CASP7 during apoptosis. Regulates transcription by direct phosphorylation of RNA polymerases I, II, III and IV. Also phosphorylates and regulates numerous transcription factors including NF-kappa-B, STAT1, CREB1, IRF1, IRF2, ATF1, ATF4, SRF, MAX, JUN, FOS, MYC and MYB. Phosphorylates Hsp90 and its co-chaperones FKBP4 and CDC37, which is essential for chaperone function. Mediates sequential phosphorylation of FNIP1, promoting its gradual interaction with Hsp90, leading to activate both kinase and non-kinase client proteins of Hsp90. Regulates Wnt signaling by phosphorylating CTNNB1 and the transcription factor LEF1. Acts as an ectokinase that phosphorylates several extracellular proteins. Phosphorylates PML at 'Ser-565' and primes it for ubiquitin-mediated degradation. Plays an important role in the circadian clock function by phosphorylating BMAL1 at 'Ser-90' which is pivotal for its interaction with CLOCK and which controls CLOCK nuclear entry. Phosphorylates FMR1, promoting FMR1-dependent formation of a membraneless compartment. May phosphorylate histone H2A on 'Ser-1'. This is Casein kinase II subunit alpha (Csnk2a1) from Rattus norvegicus (Rat).